The following is a 236-amino-acid chain: Histone H1 (236 aa).

The span at 1-10 (MPPKKTETKA) shows a compositional bias: basic and acidic residues. 2 disordered regions span residues 1-36 (MPPK…SPST) and 94-236 (KGVF…AEKA). Residues 11-36 (ADASAAAAPAPAAAPTSAPKTKSPST) show a composition bias toward low complexity. Residues 36 to 111 (THASYLDMIT…GPSGGTKLAK (76 aa)) enclose the H15 domain. Over residues 109–122 (LAKKVAKPAPKKAA) the composition is skewed to basic residues. Over residues 123 to 150 (PKKETKEKKPAAAKKEGAAKKETKEKKA) the composition is skewed to basic and acidic residues. Low complexity predominate over residues 153–162 (AKKAAAPKKA). A compositionally biased stretch (basic and acidic residues) spans 165 to 174 (PKKEVKEKKA). Over residues 202–220 (AKSTAKPAAAKKAAAPKKA) the composition is skewed to low complexity. The span at 224–236 (KKAEKAEPAAEKA) shows a compositional bias: basic and acidic residues.

This sequence belongs to the histone H1/H5 family.

The protein localises to the nucleus. It is found in the chromosome. In terms of biological role, could act as an H1-type linker histone. The polypeptide is Histone H1 (hH1) (Neurospora crassa (strain ATCC 24698 / 74-OR23-1A / CBS 708.71 / DSM 1257 / FGSC 987)).